The following is a 347-amino-acid chain: NADH-quinone oxidoreductase subunit H (347 aa).

Transmembrane regions (helical) follow at residues 13 to 33, 50 to 70, 82 to 102, 115 to 135, 161 to 181, 198 to 218, 248 to 268, 286 to 306, and 321 to 341; these read LLIL…VAYI, PNVV…KFVF, GVFL…WAVI, VGIL…IMAG, IGFV…TDIV, FLDW…ISAL, FLLF…LTTI, VPGV…FALV, and LGWK…AAFL.

Belongs to the complex I subunit 1 family. As to quaternary structure, NDH-1 is composed of 14 different subunits. Subunits NuoA, H, J, K, L, M, N constitute the membrane sector of the complex.

Its subcellular location is the cell inner membrane. The catalysed reaction is a quinone + NADH + 5 H(+)(in) = a quinol + NAD(+) + 4 H(+)(out). NDH-1 shuttles electrons from NADH, via FMN and iron-sulfur (Fe-S) centers, to quinones in the respiratory chain. The immediate electron acceptor for the enzyme in this species is believed to be ubiquinone. Couples the redox reaction to proton translocation (for every two electrons transferred, four hydrogen ions are translocated across the cytoplasmic membrane), and thus conserves the redox energy in a proton gradient. This subunit may bind ubiquinone. In Chelativorans sp. (strain BNC1), this protein is NADH-quinone oxidoreductase subunit H.